We begin with the raw amino-acid sequence, 714 residues long: Rho-GTPase-activating protein RGD2 (714 aa).

The 440-residue stretch at 2–441 (LSFCDYFWSE…LENDIDPTAD (440 aa)) folds into the F-BAR domain. The DEP domain occupies 218–298 (PKTDYKLPLI…WKNTAYMFAN (81 aa)). Residues 475–704 (VDLETRCRLD…DLLTHKKQIF (230 aa)) form the Rho-GAP domain.

As to quaternary structure, interacts with CDC42 and RHO5.

Functionally, acts in signal transduction. Activates CDC42 and RHO5. This chain is Rho-GTPase-activating protein RGD2 (RGD2), found in Saccharomyces cerevisiae (strain ATCC 204508 / S288c) (Baker's yeast).